We begin with the raw amino-acid sequence, 219 residues long: Albonoursin synthase (219 aa).

It belongs to the nitroreductase family. Homomer. The cofactor is FMN. The N-terminus is blocked.

The protein resides in the cytoplasm. It catalyses the reaction cyclo(L-phenylalanyl-L-leucyl) + 2 O2 = albonoursin + 2 H2O2. In terms of biological role, involved in the biosynthesis of albonoursin (cyclo[(alpha,beta-dehydro-Phe)-(alpha,beta-dehydro-Leu)]), an antibacterial peptide. Catalyzes the formation of alpha,beta-dehydro-Phe (DPhe) and alpha,beta-dehydro-Leu (DLeu) residues during the biosynthesis of albonoursin. The catalytic reaction of cyclo(L-Phe-L-Leu) occurs in a two-step sequential alpha-beta-dehydrogenation leading first to cyclo(alpha,beta-dehydro-Phe-L-Leu) and finally to albonoursin. Can also use cyclo(L-Phe-L-His), cyclo(L-Trp-L-Trp), cyclo(L-Leu-L-Ala), cyclo(L-Phe-Gly), cyclo(L-Leu-Gly), cyclo(L-Ser-Gly) and cyclo(L-Glu-Gly) as substrate suggesting that the diketopiperazine ring is essential for the enzymatic reaction. The protein is Albonoursin synthase (albA) of Streptomyces noursei (Streptomyces albulus).